We begin with the raw amino-acid sequence, 232 residues long: Sugar fermentation stimulation protein homolog (232 aa).

It belongs to the SfsA family.

The protein is Sugar fermentation stimulation protein homolog of Geobacter metallireducens (strain ATCC 53774 / DSM 7210 / GS-15).